A 148-amino-acid chain; its full sequence is Urease accessory protein UreE (148 aa).

It belongs to the UreE family.

The protein localises to the cytoplasm. Its function is as follows. Involved in urease metallocenter assembly. Binds nickel. Probably functions as a nickel donor during metallocenter assembly. The chain is Urease accessory protein UreE from Aliarcobacter butzleri (strain RM4018) (Arcobacter butzleri).